The sequence spans 362 residues: MTNYYAEITGWGKCLPPAVLSNDDLSTFLDTSDEWIRTRTGIENRRISHVNTSDLATVAAKQALARAGITAQDIDLIIVATCSPDSLIPNIASMVQKNLEIEAAAAFDLNAACTGFVYGLETGTRLIQSGAYRHALIIGAERLSFYIDWAMRDTAVLFGDGAGAVVLSRTEEAVGLQNAKIGCDAQGRDILSVPKFGTSMDRFAADNGYWDFNFVGKEIFKRAVKGMGSAAAHVLAHAGMSKDDINVVIPHQANIRIIQTLCDLSGIDQSKAFVNIQKYGNTSAATVPIALCEAVEQGHIKAGDNILLAAFGAGLTWGAGLVKWGQRVEAISESDAALPECDKSALELLKNAIELCNARRDK.

Residues Cys113 and His251 contribute to the active site. Residues 252-256 (QANIR) are ACP-binding. Residue Asn281 is part of the active site.

The protein belongs to the thiolase-like superfamily. FabH family. As to quaternary structure, homodimer.

Its subcellular location is the cytoplasm. The enzyme catalyses malonyl-[ACP] + acetyl-CoA + H(+) = 3-oxobutanoyl-[ACP] + CO2 + CoA. It functions in the pathway lipid metabolism; fatty acid biosynthesis. In terms of biological role, catalyzes the condensation reaction of fatty acid synthesis by the addition to an acyl acceptor of two carbons from malonyl-ACP. Catalyzes the first condensation reaction which initiates fatty acid synthesis and may therefore play a role in governing the total rate of fatty acid production. Possesses both acetoacetyl-ACP synthase and acetyl transacylase activities. Its substrate specificity determines the biosynthesis of branched-chain and/or straight-chain of fatty acids. The polypeptide is Beta-ketoacyl-[acyl-carrier-protein] synthase III 2 (Vibrio vulnificus (strain YJ016)).